The sequence spans 273 residues: NH(3)-dependent NAD(+) synthetase (273 aa).

Residue 46–53 coordinates ATP; that stretch reads GISGGQDS. Asp52 is a Mg(2+) binding site. Arg139 is a deamido-NAD(+) binding site. Residue Thr159 participates in ATP binding. Glu164 is a Mg(2+) binding site. 2 residues coordinate deamido-NAD(+): Lys172 and Asp179. 2 residues coordinate ATP: Lys188 and Thr210. Deamido-NAD(+) is bound at residue 259 to 260; sequence HK.

It belongs to the NAD synthetase family. In terms of assembly, homodimer.

The catalysed reaction is deamido-NAD(+) + NH4(+) + ATP = AMP + diphosphate + NAD(+) + H(+). Its pathway is cofactor biosynthesis; NAD(+) biosynthesis; NAD(+) from deamido-NAD(+) (ammonia route): step 1/1. Its function is as follows. Catalyzes the ATP-dependent amidation of deamido-NAD to form NAD. Uses ammonia as a nitrogen source. The protein is NH(3)-dependent NAD(+) synthetase of Mycobacteroides abscessus (strain ATCC 19977 / DSM 44196 / CCUG 20993 / CIP 104536 / JCM 13569 / NCTC 13031 / TMC 1543 / L948) (Mycobacterium abscessus).